The primary structure comprises 1108 residues: MFLGPWPFSRLLSWFAISSRLSGQHGLTSSKFLRYLCLLALLPLIWWGQALPYKIGVIGPWTCDPFFSKALPEVAAALAIERISRDMSFDRSYSFEYVILNEDCQTSKALTSFISHQQMASGFVGPANPGYCEAASLLGNSWDKGIFSWACVNHELDNKHSYPTFSRTLPSPIRVLVTVMKYFQWAHAGVISSDEDIWVHTANQVSSALRSHGLPVGVVLTSGQDSRSIQKALQQIRQADRIRIIIMCMHSALIGGETQTHFLELAHDLKMTDGTYVFVPYDVLLYSLPYKHSPYQVLRNNQKLREAYDAVLTITVESHEKTFYEAFTEAAAGGEIPEKLDSHQVSPLFGTIYNSIYFIAQAMSNALKENGQASAASLTRHSRNMQFYGFNQLIRTDSNGNGISEYVILDTNGKEWELRGTYTVDMETELLRFRGTPIHFPGGRPTSADAKCWFAQGKICQGGIDPALAMMVCFALLLALLSINGFAYFIRRRINKIQLIKGPNRILLTLEDVTFINPHFGSKRGSRASVSFQIISEVQSGRSPRLSFSSGSLTPATYENSNIAIYQGDWVWLKKFPPGDFGDIKSIKSSASDVFEMMKDLRHENVNPLLGFFYDSGMFAIVSEFCSRRSLEDILTQDDVKLDWMFKSSLLLDLIKGMKYLHHREFIHGRLKSRNCVVDGRFVLKVTDYGFNNILEMLRLSEEEPSEEELLWTAPELLRAPGGIRLGSFAGDVYSFAIIMQEVMVRGAPFCMMDLSAKEVIDRLKMPPPVYRPVVSPEFAPPECLQLMKQCWAEAAEQRPTFDEIFNQFKTFNKGKKTNIIDSMLRMLEQYSSNLEDLIRERTEELEIEKQKTEKLLTQMLPPSVAESLKKGCTVEPEGFDLVTLYFSDIVGFTTISAMSEPIEVVDLLNDLYTLFDAIIGSHDVYKVETIGDAYMVASGLPKRNGSRHAAEIANMSLDILSSVGTFKMRHMPEVPVRIRIGLHTGPVVAGVVGLTMPRYCLFGDTVNTASRMESTGLPYRIHVSLSTVTILRTLSEGYEVELRGRTELKGKGTEETFWLVGKKGFTKPLPVPPPVGKDGQVGHGLQPAEIAAFQRRKAERQLVRNKP.

The signal sequence occupies residues methionine 1–alanine 50. The Extracellular segment spans residues leucine 51–aspartate 465. A disulfide bond links cysteine 104 and cysteine 132. A helical transmembrane segment spans residues proline 466 to isoleucine 490. The Cytoplasmic portion of the chain corresponds to arginine 491–proline 1108. The Protein kinase domain occupies phenylalanine 532–phenylalanine 812. Residues threonine 884–glutamate 1014 enclose the Guanylate cyclase domain.

It belongs to the adenylyl cyclase class-4/guanylyl cyclase family. In terms of assembly, homodimer. Interacts with RD3; promotes the exit of GUCY2F from the endoplasmic reticulum and its trafficking to the photoreceptor outer segments. Post-translationally, there are 9 conserved cysteine residues in sensory guanylate cyclases, 6 in the extracellular domain, which may be involved in intra- or interchain disulfide bonds. As to expression, expressed only in the eye.

It localises to the membrane. The protein localises to the photoreceptor outer segment membrane. The enzyme catalyses GTP = 3',5'-cyclic GMP + diphosphate. Its activity is regulated as follows. Activated by GUCA1B when free calcium ions concentration is low, and inhibited by GUCA1B when free calcium ions concentration is high. Inhibited by RD3. Its function is as follows. Responsible for the synthesis of cyclic GMP (cGMP) in rods and cones of photoreceptors. Plays an essential role in phototransduction, by mediating cGMP replenishment. May also participate in the trafficking of membrane-asociated proteins to the photoreceptor outer segment membrane. The chain is Retinal guanylyl cyclase 2 (Gucy2f) from Rattus norvegicus (Rat).